The following is a 295-amino-acid chain: 3-hydroxy-5-phosphonooxypentane-2,4-dione thiolase (295 aa).

Catalysis depends on K203, which acts as the Schiff-base intermediate with substrate.

This sequence belongs to the DeoC/FbaB aldolase family. In terms of assembly, homodecamer.

The protein localises to the cytoplasm. It carries out the reaction dihydroxyacetone phosphate + acetyl-CoA = 3-hydroxy-2,4-dioxopentyl phosphate + CoA. Involved in the degradation of phospho-AI-2, thereby terminating induction of the lsr operon and closing the AI-2 signaling cycle. Catalyzes the transfer of an acetyl moiety from 3-hydroxy-5-phosphonooxypentane-2,4-dione to CoA to form glycerone phosphate and acetyl-CoA. This chain is 3-hydroxy-5-phosphonooxypentane-2,4-dione thiolase, found in Klebsiella pneumoniae subsp. pneumoniae (strain ATCC 700721 / MGH 78578).